The sequence spans 154 residues: Endoribonuclease YbeY (154 aa).

The Zn(2+) site is built by histidine 114, histidine 118, and histidine 124.

Belongs to the endoribonuclease YbeY family. It depends on Zn(2+) as a cofactor.

It is found in the cytoplasm. Single strand-specific metallo-endoribonuclease involved in late-stage 70S ribosome quality control and in maturation of the 3' terminus of the 16S rRNA. In Aggregatibacter actinomycetemcomitans (Actinobacillus actinomycetemcomitans), this protein is Endoribonuclease YbeY.